A 397-amino-acid chain; its full sequence is Vacuolar protein sorting-associated protein 37A (397 aa).

Residue Ser18 is modified to Phosphoserine. Residues 308-397 (KSTFEKKMQR…AMHSQFHAPL (90 aa)) form the VPS37 C-terminal domain.

Belongs to the VPS37 family. In terms of assembly, component of the ESCRT-I complex (endosomal sorting complex required for transport I) which consists of TSG101, VPS28, a VPS37 protein (VPS37A to -D) and MVB12A or MVB12B in a 1:1:1:1 stoichiometry. Interacts with TSG101, VPS28 and HGS. Component of an ESCRT-I complex (endosomal sorting complex required for transport I) which consists of TSG101, VPS28, VPS37A and UBAP1 in a 1:1:1:1 stoichiometry.

The protein resides in the late endosome membrane. It localises to the nucleus. Component of the ESCRT-I complex, a regulator of vesicular trafficking process. Required for the sorting of endocytic ubiquitinated cargos into multivesicular bodies. May be involved in cell growth and differentiation. This Mus musculus (Mouse) protein is Vacuolar protein sorting-associated protein 37A (Vps37a).